A 586-amino-acid polypeptide reads, in one-letter code: Kinesin-like protein KIF25 (586 aa).

A coiled-coil region spans residues 10-94 (SFWEQRTRQL…VIQKLNQDIQ (85 aa)). The region spanning 173–565 (NIRVHCRIRP…LGFGIRARQV (393 aa)) is the Kinesin motor domain. 267–274 (GQTGSGKS) is an ATP binding site. Disordered stretches follow at residues 417–460 (TADQ…AGRA) and 564–586 (QVQR…RRPD).

The protein belongs to the TRAFAC class myosin-kinesin ATPase superfamily. Kinesin family. As to quaternary structure, homotetramer.

It localises to the cytoplasm. It is found in the cytoskeleton. Its subcellular location is the microtubule organizing center. The protein resides in the centrosome. Functionally, minus-end microtubule-dependent motor protein. Acts as a negative regulator of centrosome separation required to prevent premature centrosome separation during interphase. Required to maintain a centered nucleus to ensure that the spindle is stably oriented at the onset of mitosis. May also act as a negative regulator of amino acid starvation-induced autophagy. The chain is Kinesin-like protein KIF25 from Macaca fascicularis (Crab-eating macaque).